Reading from the N-terminus, the 242-residue chain is Probable transcriptional regulatory protein Bcep18194_A5621 (242 aa).

Belongs to the TACO1 family.

The protein localises to the cytoplasm. This is Probable transcriptional regulatory protein Bcep18194_A5621 from Burkholderia lata (strain ATCC 17760 / DSM 23089 / LMG 22485 / NCIMB 9086 / R18194 / 383).